The chain runs to 84 residues: Small ribosomal subunit protein uS17 (84 aa).

The protein belongs to the universal ribosomal protein uS17 family. Part of the 30S ribosomal subunit.

One of the primary rRNA binding proteins, it binds specifically to the 5'-end of 16S ribosomal RNA. The sequence is that of Small ribosomal subunit protein uS17 from Clostridium kluyveri (strain NBRC 12016).